The sequence spans 281 residues: Pantothenate synthetase (281 aa).

An ATP-binding site is contributed by 30 to 37 (MGNLHQGH). Catalysis depends on His37, which acts as the Proton donor. Gln61 contacts (R)-pantoate. Gln61 contributes to the beta-alanine binding site. 149–152 (GNKD) lines the ATP pocket. Gln155 contributes to the (R)-pantoate binding site. ATP-binding positions include Ile178 and 186–189 (MSSR).

This sequence belongs to the pantothenate synthetase family. Homodimer.

It is found in the cytoplasm. The catalysed reaction is (R)-pantoate + beta-alanine + ATP = (R)-pantothenate + AMP + diphosphate + H(+). Its pathway is cofactor biosynthesis; (R)-pantothenate biosynthesis; (R)-pantothenate from (R)-pantoate and beta-alanine: step 1/1. Its function is as follows. Catalyzes the condensation of pantoate with beta-alanine in an ATP-dependent reaction via a pantoyl-adenylate intermediate. This Shewanella sp. (strain MR-7) protein is Pantothenate synthetase.